A 378-amino-acid chain; its full sequence is uncharacterized protein (378 aa).

The span at 150–176 shows a compositional bias: low complexity; it reads TTTATTSNNRFNNNNSNNNNINNNNDN. The tract at residues 150–187 is disordered; it reads TTTATTSNNRFNNNNSNNNNINNNNDNNNKEQKKESRC. Residues 177–187 are compositionally biased toward basic and acidic residues; that stretch reads NNKEQKKESRC.

This is an uncharacterized protein from Dictyostelium discoideum (Social amoeba).